The following is a 261-amino-acid chain: Uridine-cytidine kinase 2 (261 aa).

The segment covering 1 to 16 has biased composition (polar residues); the sequence is MAGDSEQTLQNHQQPN. A disordered region spans residues 1 to 24; the sequence is MAGDSEQTLQNHQQPNGGEPFLIG. The residue at position 2 (Ala2) is an N-acetylalanine. ATP is bound at residue 27-35; it reads GGTASGKSS. Residues Asp84, Tyr112, His117, Arg166, Arg176, and Gln184 each coordinate substrate. Residue Asp213 participates in ATP binding. The tract at residues 240–261 is disordered; it reads GYLNGYTPSRKRQASESSSRPH. Ser254 bears the Phosphoserine mark.

This sequence belongs to the uridine kinase family. In terms of assembly, homotetramer.

The catalysed reaction is uridine + ATP = UMP + ADP + H(+). It catalyses the reaction cytidine + ATP = CMP + ADP + H(+). Its pathway is pyrimidine metabolism; CTP biosynthesis via salvage pathway; CTP from cytidine: step 1/3. It participates in pyrimidine metabolism; UMP biosynthesis via salvage pathway; UMP from uridine: step 1/1. Phosphorylates uridine and cytidine to uridine monophosphate and cytidine monophosphate. Does not phosphorylate deoxyribonucleosides or purine ribonucleosides. Can use ATP or GTP as a phosphate donor. The protein is Uridine-cytidine kinase 2 (Uck2) of Mus musculus (Mouse).